The primary structure comprises 507 residues: MITLTPGRLTLPQLRRIARENVQIALDPASFAAIDRGAQAVADIAAKGEPAYGINTGFGRLASTHIPHDQLELLQKNLVLSHAVGVGEPMARPVVRLLMALKLSSLGRGHSGIRRVVMDALVTLFNADVLPLIPVKGSVGASGDLAPLAHMSAVLLGIGDVFIRGERASAAEGLRVAGLAPLTLEAKEGLALLNGTQASTALALDNLFAIEDLYRTALVSGALSVDAAAGSVKPFDARIHELRGHRGQIDAAAAYRSLLDGSAINVSHRDCDKVQDPYSLRCQPQVMGACLDQIRHAAGVLLIEANAVSDNPLIFPDTGEVLSGGNFHAEPVAFAADNLAIAAAEIGALAERRIALLIDATLSGLPPFLVKDGGVNSGFMIAHVTAAALASENKTLAHPASVDSLPTSANQEDHVSMATFAARKLTDIAENVANILAIELLAAAQGVDLRAPHATSPALQHAMKTIRADVAHYDLDHYFAPDIAVVARRVRERAFATLSPLSFESEQ.

A cross-link (5-imidazolinone (Ala-Gly)) is located at residues 141 to 143 (ASG). Ser-142 bears the 2,3-didehydroalanine (Ser) mark.

Belongs to the PAL/histidase family. Contains an active site 4-methylidene-imidazol-5-one (MIO), which is formed autocatalytically by cyclization and dehydration of residues Ala-Ser-Gly.

The protein resides in the cytoplasm. The enzyme catalyses L-histidine = trans-urocanate + NH4(+). The protein operates within amino-acid degradation; L-histidine degradation into L-glutamate; N-formimidoyl-L-glutamate from L-histidine: step 1/3. In Burkholderia mallei (strain NCTC 10247), this protein is Histidine ammonia-lyase.